The following is a 333-amino-acid chain: Nucleoid-associated protein HAPS_0704 (333 aa).

It belongs to the YejK family.

The protein localises to the cytoplasm. It is found in the nucleoid. In Glaesserella parasuis serovar 5 (strain SH0165) (Haemophilus parasuis), this protein is Nucleoid-associated protein HAPS_0704.